Here is a 293-residue protein sequence, read N- to C-terminus: Acetylglutamate kinase (293 aa).

Substrate is bound by residues 70–71 (GG), R92, and N186.

It belongs to the acetylglutamate kinase family. ArgB subfamily.

It is found in the cytoplasm. It catalyses the reaction N-acetyl-L-glutamate + ATP = N-acetyl-L-glutamyl 5-phosphate + ADP. It participates in amino-acid biosynthesis; L-arginine biosynthesis; N(2)-acetyl-L-ornithine from L-glutamate: step 2/4. Catalyzes the ATP-dependent phosphorylation of N-acetyl-L-glutamate. In Parasynechococcus marenigrum (strain WH8102), this protein is Acetylglutamate kinase.